We begin with the raw amino-acid sequence, 703 residues long: DnaJ homolog subfamily C member 14 (703 aa).

2 disordered regions span residues 1-150 (MAQK…DGSS) and 164-229 (EDEE…RKRS). The segment covering 17-28 (SGGSSLITSGSS) has biased composition (low complexity). A compositionally biased stretch (pro residues) spans 75-84 (HGPPRGPGPP). Acidic residues-rich tracts occupy residues 89–102 (YPDESETCSEESGV) and 164–176 (EDEELEEEYDDEE). Residues 193 to 202 (PPSRRQRHRF) show a composition bias toward basic residues. Positions 203–218 (LTKEDVRDSGRRDPKA) are enriched in basic and acidic residues. Residues 219–228 (PGRHRLARKR) show a composition bias toward basic residues. The next 3 helical transmembrane spans lie at 254 to 274 (WWLIELLVLVGEYVETCGYLI), 305 to 325 (VMFQFLSQSFFSVAGLFIRLL), and 327 to 347 (VVGAFLLLALALFLGCLQLGW). A J domain is found at 444-508 (NPFHVLGVEA…ERRKEYEMKR (65 aa)). Disordered regions lie at residues 622 to 643 (FGSRVPGTSGRQRATPESPPAD) and 659 to 703 (MSNG…PFQR). Positions 673–684 (GTTSTSRPNSSV) are enriched in polar residues. Residues 691 to 703 (PKRRKKVRRPFQR) are compositionally biased toward basic residues.

In terms of assembly, interacts with the FxxxFxxxF motif of DRD1 via its C-terminal domain. As to expression, detected in heart, brain, lung, liver, skeletal muscle, kidney and testis.

The protein resides in the endoplasmic reticulum membrane. In terms of biological role, regulates the export of target proteins, such as DRD1, from the endoplasmic reticulum to the cell surface. In Rattus norvegicus (Rat), this protein is DnaJ homolog subfamily C member 14 (Dnajc14).